A 918-amino-acid chain; its full sequence is uncharacterized protein (918 aa).

7 disordered regions span residues 66–150, 226–283, 326–481, 515–548, 594–707, 737–774, and 800–918; these read AMVH…SSYG, GADG…NADF, ADGT…EFGN, ALEK…GSNL, EITH…NAVK, NHSN…SHLT, and HITH…IIQM. A compositionally biased stretch (low complexity) spans 79–89; the sequence is QSSGSSSNTHS. Residues 103-127 are compositionally biased toward basic and acidic residues; that stretch reads NSEKKDGYNKESKVDEANENTKIKS. The segment covering 270–281 has biased composition (low complexity); that stretch reads SKKAASASGSNA. Composition is skewed to polar residues over residues 326–354, 363–372, and 379–404; these read ADGT…SSDL, KSHSTSNKTD, and ANQS…SSIE. Positions 430–441 are enriched in low complexity; that stretch reads SSSHSKSASGTS. Residues 515 to 533 are compositionally biased toward basic and acidic residues; the sequence is ALEKNHEKNSDGTFKDESK. Polar residues-rich tracts occupy residues 534–545 and 604–619; these read GSNSRVNRTDGG and VAAS…TSMS. Positions 632–647 are enriched in low complexity; sequence SSQAADSHDAISASSD. The segment covering 648–660 has biased composition (basic and acidic residues); that stretch reads VDAKIVKHADRSE. Positions 661-672 are enriched in polar residues; sequence SISNDSSNQTAS. A compositionally biased stretch (basic and acidic residues) spans 673–688; sequence EHNDSSKQSEHEKRQN. Over residues 689–702 the composition is skewed to polar residues; sequence ADGSFSDVSSNSAK. 4 stretches are compositionally biased toward basic and acidic residues: residues 738–765, 800–814, 830–846, and 883–918; these read HSND…DAKH, HITH…DAGH, EGFK…EGAQ, and LAKD…IIQM.

This is an uncharacterized protein from Caenorhabditis elegans.